A 59-amino-acid polypeptide reads, in one-letter code: UPF0181 protein YoaH (59 aa).

This sequence belongs to the UPF0181 family.

This is UPF0181 protein YoaH from Shigella flexneri serotype 5b (strain 8401).